A 576-amino-acid chain; its full sequence is MDGKDKATGKCPVMHGAMTAAGVSNTSWWPNALNLDILHQHDTKGNPLNGFDYRAAVKGLDVGLRADLHALMTDSQPWWPADWGHYGGLMIRMAWHAAGSYRAADGRGGGNTGKPARFAPLNSWPDNVSLDKARRLLWPIKKKYGNAVSWADLILFAGTVAYESMGLKTFGFGFGREDIWAPEKDVYWGAEKDWLAPSDGRYGDLAKPETMENPLAAVQMGLIYVNPEGVNGQPDPARTALHIRETFARMGMNDEETVALTAGGHTVGKAHGNGDAKALGPDPEAADVTVRALAGRTRIWAARRRRPSPRGSRAPGPRIRRAGTWAISRCSSGHDWELTKSPAGAWQWKPVTIAEEAKPLDATDLTTRHDPLMTDADMAMKVDPSTMRSVRSSWPIRPPSTTLSRAPGSSCCIATWGRRRATSAPMCPPRIWSAGPGAAGPTGWDVAKVKAQIAASGLSVADLVATAWDSARTFRQSDYRGGANGARIRLAPQKDWAGNEPERLAGACGARTDRGGAGASVADVIVLAGNLGVEQAAAGVSRWRCPSPPVAAMRAAMTDGPSLTCWSRCMTASATG.

The tryptophyl-tyrosyl-methioninium (Trp-Tyr) (with M-250) cross-link spans 95 to 224; that stretch reads WHAAGSYRAA…LAAVQMGLIY (130 aa). The Proton acceptor role is filled by histidine 96. A cross-link (tryptophyl-tyrosyl-methioninium (Tyr-Met) (with W-95)) is located at residues 224–250; sequence YVNPEGVNGQPDPARTALHIRETFARM. Residue histidine 265 participates in heme b binding.

This sequence belongs to the peroxidase family. Peroxidase/catalase subfamily. As to quaternary structure, homotetramer. Heme b is required as a cofactor. Formation of the three residue Trp-Tyr-Met cross-link is important for the catalase, but not the peroxidase activity of the enzyme.

The enzyme catalyses H2O2 + AH2 = A + 2 H2O. It carries out the reaction 2 H2O2 = O2 + 2 H2O. Its function is as follows. Bifunctional enzyme with both catalase and broad-spectrum peroxidase activity. Also displays NADH oxidase, INH lyase and isonicotinoyl-NAD synthase activities. Important for stationary phase survival. The protein is Catalase-peroxidase (katG) of Rhodobacter capsulatus (Rhodopseudomonas capsulata).